The following is a 233-amino-acid chain: Fibrillarin-like rRNA/tRNA 2'-O-methyltransferase (233 aa).

S-adenosyl-L-methionine-binding positions include 90–91 (TT), 109–110 (EF), 134–135 (DA), and 154–157 (DVAQ).

This sequence belongs to the methyltransferase superfamily. Fibrillarin family. Interacts with nop5. Component of box C/D small ribonucleoprotein (sRNP) particles that contain rpl7ae, FlpA and nop5, plus a guide RNA.

Functionally, involved in pre-rRNA and tRNA processing. Utilizes the methyl donor S-adenosyl-L-methionine to catalyze the site-specific 2'-hydroxyl methylation of ribose moieties in rRNA and tRNA. Site specificity is provided by a guide RNA that base pairs with the substrate. Methylation occurs at a characteristic distance from the sequence involved in base pairing with the guide RNA. In Aeropyrum pernix (strain ATCC 700893 / DSM 11879 / JCM 9820 / NBRC 100138 / K1), this protein is Fibrillarin-like rRNA/tRNA 2'-O-methyltransferase.